Here is a 167-residue protein sequence, read N- to C-terminus: NADPH-dependent 7-cyano-7-deazaguanine reductase (167 aa).

Positions 1–24 (MTTRSQDQTRDLKVLGTGRLTSPE) are disordered. Residue C57 is the Thioimide intermediate of the active site. The Proton donor role is filled by D64. Substrate-binding positions include 79–81 (VES) and 98–99 (ME).

This sequence belongs to the GTP cyclohydrolase I family. QueF type 1 subfamily.

It localises to the cytoplasm. It catalyses the reaction 7-aminomethyl-7-carbaguanine + 2 NADP(+) = 7-cyano-7-deazaguanine + 2 NADPH + 3 H(+). It functions in the pathway tRNA modification; tRNA-queuosine biosynthesis. Its function is as follows. Catalyzes the NADPH-dependent reduction of 7-cyano-7-deazaguanine (preQ0) to 7-aminomethyl-7-deazaguanine (preQ1). This chain is NADPH-dependent 7-cyano-7-deazaguanine reductase, found in Desulfovibrio desulfuricans (strain ATCC 27774 / DSM 6949 / MB).